The following is a 307-amino-acid chain: Elongation factor Ts (307 aa).

Residues T79–V82 form an involved in Mg(2+) ion dislocation from EF-Tu region.

The protein belongs to the EF-Ts family.

Its subcellular location is the cytoplasm. Functionally, associates with the EF-Tu.GDP complex and induces the exchange of GDP to GTP. It remains bound to the aminoacyl-tRNA.EF-Tu.GTP complex up to the GTP hydrolysis stage on the ribosome. The sequence is that of Elongation factor Ts from Bartonella bacilliformis (strain ATCC 35685 / KC583 / Herrer 020/F12,63).